Reading from the N-terminus, the 329-residue chain is Replication factor C small subunit 1 (329 aa).

44–51 (GPPGTGKT) lines the ATP pocket.

Belongs to the activator 1 small subunits family. RfcS subfamily. Heteromultimer composed of small subunits (RfcS) and large subunits (RfcL).

Its function is as follows. Part of the RFC clamp loader complex which loads the PCNA sliding clamp onto DNA. The polypeptide is Replication factor C small subunit 1 (Pyrobaculum islandicum (strain DSM 4184 / JCM 9189 / GEO3)).